The chain runs to 214 residues: DNA-binding protein HupB (214 aa).

At lysine 3 the chain carries N6-acetyllysine. N6-succinyllysine is present on lysine 3. 2 positions are modified to phosphothreonine: threonine 43 and threonine 45. N6-acetyllysine is present on residues lysine 72, lysine 86, and lysine 103. Positions proline 100–lysine 214 are disordered. The segment covering valine 102–lysine 112 has biased composition (low complexity). The residue at position 113 (lysine 113) is an N6-succinyllysine. Residues lysine 113 to lysine 214 are compositionally biased toward basic residues. N6-acetyllysine occurs at positions 116 and 133. Lysine 142 bears the N6-succinyllysine mark. N6-acetyllysine occurs at positions 146 and 167.

The protein belongs to the bacterial histone-like protein family. Long actinobacterial subfamily. As to quaternary structure, oligomerizes. Homodimer; the crystallized protein is missing the C-terminal 105 residues. Interacts with topoisomerase 1 (topA). Interacts with Eis. Interacts with NAD-dependent protein deacylase NPD (MRA_1161). Interacts with MRA_0812 CoA transferase. Phosphorylated in vivo on Ser and Thr-residues; the protein is degraded during purification so most sites were not identified, but at least one of Thr-43 and/or Thr-45 are modified in vivo. In vitro at least PknE, PknF and PknB phosphorylate HupB; PknE is the most active and phosphorylates many sites in vitro including Thr-43 and Thr-45. Post-translationally, acetylated on 8 Lys residues in vivo (probably by Eis). In vitro acetylated by Eis on 28 residues (strains H37Rv and H37Ra), many more than those identified in vivo. Also acetylated by MRA_0812. Deacetylated in vitro by NAD-dependent protein deacylase NPD (MRA_1161). In terms of processing, succinylated in vivo and in vitro by MRA_0812 and by Eis; only 3 residues are found to be succinylated in vivo, while 27 are modifed in vitro by MRA_0812 and 32 are succinylated by Eis. NAD-dependent protein deacylase (MRA_1161) desuccinylates this protein.

Its subcellular location is the cytoplasm. The protein localises to the nucleoid. It catalyses the reaction 4 Fe(2+) + O2 + 4 H(+) = 4 Fe(3+) + 2 H2O. With respect to regulation, two trans-stilbene derivatives, 4,4'-[(E)-ethene-1,2 diylbis({5[(phenylcarbonyl)amino]benzene-2,1-diyl}sulfonylimino)] dibenzoic acid and its methoxy derivative 4,4'-[1,2-ethenediylbis({5-[(4-methoxybenzoyl)amino]-2,1phenylene}sulfonylimino)] dibenzoic acid, respectively SD1 and SD4, inhibit DNA binding with 50% inhibition at 20 uM for SD1 and 1.7 uM for SD4. SD1 and SD4 have minimal inhibitory concentrations of 400 and 800 uM on strain H37Ra respectively. A nucleoid-associated protein (NAP) that plays a role in local chromosome architecture. Binds DNA non-sequence specifically; in vitro phosphorylation of an N-terminal fragment decreases DNA-binding. Stimulates supercoiling relaxation by topoisomerase 1 (Top1, topA), at higher than 80 uM inhibits relaxation, has no effect on DNA gyrase; the effect is independent of DNA-binding. Increases the intervening strand passage activity of Top1 that occurs between the two catalytic trans-esterification reactions. Does not bind ssDNA, probably helps condense chromosomes. Binds dsDNA; in vitro acetylated protein binds 10-fold less well to DNA (note in vitro acetylated protein is more heavily modified than in vivo modified protein). In vitro acetylated protein compacts DNA less well than unmodified protein. In vitro succinylated DNA bind dsDNA less well than unmodified protein (note in vitro succinylated protein is more heavily modified than in vivo modified protein). Functionally, has ferroxidase activity, converts Fe(2+) into Fe(3+). Binds Fe(3+) but not Fe(2+); prevents the generation of hydroxyl radicals by the Fenton reaction and thus protects DNA from damage. May function in iron storage. Its function is as follows. Required for biofilm formation; trimethylation by recombinant human SUV39H1 (a histone methyltransferase) inhibits biofilm formation. Probably influences transcription. RNase E and HupB jointly contribute to cellular adaptation to changing growth conditions and survival during antibiotic treatment and in the host. The sequence is that of DNA-binding protein HupB from Mycobacterium tuberculosis (strain ATCC 25177 / H37Ra).